A 163-amino-acid chain; its full sequence is Antimicrobial peptide 2 (163 aa).

Positions 1 to 22 (MLNMKSFALLMLFATLVGVTIA) are cleaved as a signal peptide. Chitin-binding type-1 domains follow at residues 26-66 (NGKC…EIEP) and 69-107 (AGQCYRGRCSGGLCCSKYGYCGSGPAYCGLGMCQGSCLP). Intrachain disulfides connect C29-C42, C36-C48, and C41-C55. Positions 58 to 67 (NTPLSEIEPT) are excised as a propeptide. 4 disulfides stabilise this stretch: C72/C83, C77/C89, C82/C96, and C101/C105. The propeptide occupies 100 to 163 (MCQGSCLPDM…QVEPAVTKAP (64 aa)).

In terms of tissue distribution, expressed in roots, flowers, stem and leaves.

Its function is as follows. Antimicrobial peptide. This is Antimicrobial peptide 2 from Stellaria media (Common chickweed).